Here is a 187-residue protein sequence, read N- to C-terminus: Interferon beta (187 aa).

The first 21 residues, 1–21, serve as a signal peptide directing secretion; that stretch reads MTNKCLLQIALLLCFSTTALS. At Tyr24 the chain carries Phosphotyrosine. Cys52 and Cys162 are oxidised to a cystine. The N-linked (GlcNAc...) asparagine glycan is linked to Asn101.

This sequence belongs to the alpha/beta interferon family. Monomer.

The protein localises to the secreted. Functionally, type I interferon cytokine that plays a key role in the innate immune response to infection, developing tumors and other inflammatory stimuli. Signals via binding to high-affinity (IFNAR2) and low-affinity (IFNAR1) heterodimeric receptor, activating the canonical Jak-STAT signaling pathway resulting in transcriptional activation or repression of interferon-regulated genes that encode the effectors of the interferon response, such as antiviral proteins, regulators of cell proliferation and differentiation, and immunoregulatory proteins. Signals mostly via binding to a IFNAR1-IFNAR2 heterodimeric receptor, but can also function with IFNAR1 alone and independently of Jak-STAT pathways. Elicits a wide variety of responses, including antiviral and antibacterial activities, and can regulate the development of B-cells, myelopoiesis and lipopolysaccharide (LPS)-inducible production of tumor necrosis factor. Plays a role in neuronal homeostasis by regulating dopamine turnover and protecting dopaminergic neurons: acts by promoting neuronal autophagy and alpha-synuclein clearance, thereby preventing dopaminergic neuron loss. IFNB1 is more potent than interferon-alpha (IFN-alpha) in inducing the apoptotic and antiproliferative pathways required for control of tumor cell growth. The protein is Interferon beta of Homo sapiens (Human).